Consider the following 255-residue polypeptide: Aliphatic sulfonates import ATP-binding protein SsuB (255 aa).

The region spanning L12–L233 is the ABC transporter domain. Residue G44 to S51 participates in ATP binding.

Belongs to the ABC transporter superfamily. Aliphatic sulfonates importer (TC 3.A.1.17.2) family. The complex is composed of two ATP-binding proteins (SsuB), two transmembrane proteins (SsuC) and a solute-binding protein (SsuA).

It is found in the cell inner membrane. It catalyses the reaction ATP + H2O + aliphatic sulfonate-[sulfonate-binding protein]Side 1 = ADP + phosphate + aliphatic sulfonateSide 2 + [sulfonate-binding protein]Side 1.. In terms of biological role, part of the ABC transporter complex SsuABC involved in aliphatic sulfonates import. Responsible for energy coupling to the transport system. The polypeptide is Aliphatic sulfonates import ATP-binding protein SsuB (Escherichia coli (strain K12)).